The primary structure comprises 358 residues: Alternative oxidase, mitochondrial (358 aa).

The helical transmembrane segment at 152–172 (LIRYVFLESVAGVPGMVAGML) threads the bilayer. Residues glutamate 159, glutamate 198, and histidine 201 each coordinate Fe cation. The helical transmembrane segment at 218-238 (MILGAQGVFFNSFFLCYLFSP) threads the bilayer. Residues glutamate 249, glutamate 306, and histidine 309 each contribute to the Fe cation site.

Belongs to the alternative oxidase family. The cofactor is Fe cation.

It is found in the mitochondrion inner membrane. Its function is as follows. Catalyzes cyanide-resistant oxygen consumption. May increase respiration when the cytochrome respiratory pathway is restricted, or in response to low temperatures. The sequence is that of Alternative oxidase, mitochondrial (AOX1) from Monilinia fructicola (Brown rot fungus).